The following is a 179-amino-acid chain: Adenine phosphoribosyltransferase (179 aa).

It belongs to the purine/pyrimidine phosphoribosyltransferase family. Homodimer.

It is found in the cytoplasm. The catalysed reaction is AMP + diphosphate = 5-phospho-alpha-D-ribose 1-diphosphate + adenine. It participates in purine metabolism; AMP biosynthesis via salvage pathway; AMP from adenine: step 1/1. In terms of biological role, catalyzes a salvage reaction resulting in the formation of AMP, that is energically less costly than de novo synthesis. The polypeptide is Adenine phosphoribosyltransferase (Helicobacter pylori (strain G27)).